The chain runs to 553 residues: MDISYPVINAGGLKNIASQIIMEIELDKRENRPTDNVPPDDIGKIEVVDDAEMEQFYGSSTTDAYRLKSELVSQCMADIGMGRFQWKLFTVAGFGWIVDNFCSQGISAVQPPIQQEFSGIKQVSYSSVAYYVGMIIGASFWGISSDLIGRKPAFNSTLAIAGIFLCAAAGTSNFIAFSALWAVIGTAAGGNVVCDSMILLEFIPGSHQYLLTALSGWWNLGQLVVSLLAWVFLANFSCPTDATPDTCSRADNMGWRYTLITLGGLSLAFTFVRIFVFKMPETPRYLLSQGNDQAAVDAVNYVARQNGKPEPLTLSMLQAIDVRLGFTPNAEERLSTKDILKENMQEFRGEHYQALFATRKLSQHTALIWAVWLIIGIAYPLYFNFLPSYLATRFTQDSSLDLTYRNYCIQSAVGVVGPLSAAVLVNTFLGRRWMMGISSIVTGVFLFAYVGVKTPMSSLAFSCVTGLLANFANQLSEYAIMYAFTPESFPAPHRGTASGTAASLLRFGGLVASLIASETGFTTAPIYASAALWVGVGVLCFGLPFETHGHAAI.

5 helical membrane passes run 89–109 (FTVA…ISAV), 128–148 (VAYY…SDLI), 152–172 (PAFN…AGTS), 174–194 (FIAF…NVVC), and 213–233 (ALSG…WVFL). An N-linked (GlcNAc...) asparagine glycan is attached at asparagine 235. A run of 7 helical transmembrane segments spans residues 257–277 (YTLI…IFVF), 366–386 (ALIW…FNFL), 409–429 (IQSA…NTFL), 433–453 (WMMG…VGVK), 459–481 (LAFS…YAIM), 496–516 (TASG…SLIA), and 525–545 (PIYA…GLPF).

This sequence belongs to the major facilitator superfamily.

The protein resides in the cell membrane. Functionally, major facilitator-type transporter, part of the hnx cluster involved in the purine degradation. The nicotinate hydroxylase hnxS accepts nicotinate as a substrate and catalyzes the first step of nicotinate catabolism. The major facilitator-type transporters hxnP and hxnZ are probably involved in the uptake of nicotinate-derived metabolites, and the oxidoreductases hxnT and hxnY in the further metabolism of 6-OH nicotinic acid. The sequence is that of Major facilitator-type transporter hxnZ from Emericella nidulans (strain FGSC A4 / ATCC 38163 / CBS 112.46 / NRRL 194 / M139) (Aspergillus nidulans).